The sequence spans 109 residues: Parvalbumin-7 (109 aa).

Residue Ala2 is modified to N-acetylalanine. EF-hand domains are found at residues 39 to 74 (LSAD…FSAD) and 78 to 109 (LTDK…LVHE). Ca(2+) contacts are provided by Asp52, Asp54, Ser56, Phe58, Glu60, Glu63, Asp91, Asp93, Asp95, Lys97, and Glu102.

This sequence belongs to the parvalbumin family.

In terms of biological role, in muscle, parvalbumin is thought to be involved in relaxation after contraction. It binds two calcium ions. The polypeptide is Parvalbumin-7 (pvalb7) (Danio rerio (Zebrafish)).